Reading from the N-terminus, the 268-residue chain is Bis(5'-nucleosyl)-tetraphosphatase, symmetrical (268 aa).

Belongs to the Ap4A hydrolase family.

The catalysed reaction is P(1),P(4)-bis(5'-adenosyl) tetraphosphate + H2O = 2 ADP + 2 H(+). Its function is as follows. Hydrolyzes diadenosine 5',5'''-P1,P4-tetraphosphate to yield ADP. The chain is Bis(5'-nucleosyl)-tetraphosphatase, symmetrical from Nitrosomonas europaea (strain ATCC 19718 / CIP 103999 / KCTC 2705 / NBRC 14298).